Reading from the N-terminus, the 313-residue chain is Ribosomal RNA small subunit methyltransferase H (313 aa).

Residues 35 to 37 (GGH), D55, F79, D101, and Q108 each bind S-adenosyl-L-methionine.

This sequence belongs to the methyltransferase superfamily. RsmH family.

Its subcellular location is the cytoplasm. The catalysed reaction is cytidine(1402) in 16S rRNA + S-adenosyl-L-methionine = N(4)-methylcytidine(1402) in 16S rRNA + S-adenosyl-L-homocysteine + H(+). In terms of biological role, specifically methylates the N4 position of cytidine in position 1402 (C1402) of 16S rRNA. The polypeptide is Ribosomal RNA small subunit methyltransferase H (Shigella flexneri serotype 5b (strain 8401)).